Reading from the N-terminus, the 299-residue chain is Probable lipid kinase YegS (299 aa).

The DAGKc domain maps to Ala-2 to Thr-133. Residues Thr-40, Gly-66–Glu-72, and Thr-95 each bind ATP. Residues Leu-215, Asp-218, and Leu-220 each contribute to the Mg(2+) site. The active-site Proton acceptor is the Glu-271.

Belongs to the diacylglycerol/lipid kinase family. YegS lipid kinase subfamily. Requires Mg(2+) as cofactor. Ca(2+) serves as cofactor.

It localises to the cytoplasm. In terms of biological role, probably phosphorylates lipids; the in vivo substrate is unknown. This is Probable lipid kinase YegS from Escherichia coli O6:K15:H31 (strain 536 / UPEC).